Reading from the N-terminus, the 358-residue chain is MKKKVLVGMSGGVDSSVAAYLLKQQGYDVIGATMQIWQHDEEFEEREGGCCSLSAVDDARRVCDKLDIPFYVLNFRDYFKEKVIDKFVQEYIDGKTPNPCIECNKHLKFDELLRRARGIGADYVATGHYAKIEKRDDRYLLIRSDDDRKDQTYALYNFTQDQLEHTLMPCGDYEKTKIREIAKEIGLAVHNKKDSEEICFISDNNHGKYISEAEPNRVKPGNFVDKSGNILGKHKGIVYYTIGQRKGLGLSLGRPVFVTNINAKTNEVVLGSEDDIFKTELIATDVNFIPFDKLEKEIEVTAKIRYSARPAEATLIPLPNGRVKVIFKEKQRAITKGQSVVFYDDEIVVGGGIIESII.

ATP is bound by residues 8 to 15 and Met-34; that span reads GMSGGVDS. The active-site Nucleophile is the Cys-103. Cysteines 103 and 199 form a disulfide. Position 127 (Gly-127) interacts with ATP. Residues 149-151 form an interaction with tRNA region; it reads KDQ. Catalysis depends on Cys-199, which acts as the Cysteine persulfide intermediate. The interval 305–306 is interaction with tRNA; that stretch reads RY.

The protein belongs to the MnmA/TRMU family.

The protein localises to the cytoplasm. The catalysed reaction is S-sulfanyl-L-cysteinyl-[protein] + uridine(34) in tRNA + AH2 + ATP = 2-thiouridine(34) in tRNA + L-cysteinyl-[protein] + A + AMP + diphosphate + H(+). In terms of biological role, catalyzes the 2-thiolation of uridine at the wobble position (U34) of tRNA, leading to the formation of s(2)U34. The protein is tRNA-specific 2-thiouridylase MnmA of Clostridium beijerinckii (strain ATCC 51743 / NCIMB 8052) (Clostridium acetobutylicum).